The sequence spans 238 residues: Protein lifeguard 4 (238 aa).

At 1-38 (MADTDPGYPRSSIEDDFNYGSCVASASVHIRMAFLRKV) the chain is on the cytoplasmic side. A helical membrane pass occupies residues 39-59 (YSILSLQVLLTTVTSALFLYF). Residues 60 to 68 (QALRTFVHE) are Lumenal-facing. A helical transmembrane segment spans residues 69 to 89 (SPALIVVFALGSLGLIFALTL). At 90–97 (HRHTHPLN) the chain is on the cytoplasmic side. The chain crosses the membrane as a helical span at residues 98–118 (LYLLFAFTLSESLAVAAVVTF). Residues 119–120 (YD) are Lumenal-facing. Residues 121–141 (VYLVLQAFIMTTAVFLGLTAY) form a helical membrane-spanning segment. Over 142 to 151 (TLQSKRDFTK) the chain is Cytoplasmic. Residues 152–172 (FGAGLFAGLWILCLAGFLKLF) form a helical membrane-spanning segment. Residues 173-175 (FYS) lie on the Lumenal side of the membrane. The chain crosses the membrane as a helical span at residues 176–196 (ETMELVLASLGALLFCGFIIY). Residues 197 to 208 (DTHSLMHRLSPE) lie on the Cytoplasmic side of the membrane. An intramembrane region (helical) is located at residues 209–229 (EYVIAAISLYMDIINLFLHLL). The Cytoplasmic segment spans residues 230–238 (KFLEAVNKK).

It belongs to the BI1 family. LFG subfamily. Interacts with ITPR3.

The protein resides in the golgi apparatus membrane. Anti-apoptotic protein which can inhibit apoptosis induced by intrinsic and extrinsic apoptotic stimuli. Can modulate both capacitative Ca2+ entry and inositol 1,4,5-trisphosphate (IP3)-mediated Ca2+ release. This chain is Protein lifeguard 4 (Tmbim4), found in Mus musculus (Mouse).